The sequence spans 290 residues: UPF0761 membrane protein Ent638_4092 (290 aa).

Transmembrane regions (helical) follow at residues L44–F64, V104–L124, F140–I160, I183–L203, A210–L230, and V244–L264.

The protein belongs to the UPF0761 family.

Its subcellular location is the cell inner membrane. The polypeptide is UPF0761 membrane protein Ent638_4092 (Enterobacter sp. (strain 638)).